A 508-amino-acid polypeptide reads, in one-letter code: Rhamnogalacturonan I rhamnosyltransferase 1 (508 aa).

Residues 41–63 form a helical; Signal-anchor for type II membrane protein membrane-spanning segment; the sequence is LWMIRAVTVLLLWSCFVHLMALG. Asparagine 136, asparagine 202, and asparagine 223 each carry an N-linked (GlcNAc...) asparagine glycan. 277–279 is a substrate binding site; the sequence is HLR. Asparagine 391 carries an N-linked (GlcNAc...) asparagine glycan.

The protein belongs to the glycosyltransferase GT106 family. In terms of tissue distribution, highly expressed in siliques. Expressed in stems and flowers. Expressed at low levels in roots and rosette leaves.

It is found in the golgi apparatus membrane. It carries out the reaction alpha-D-galacturonosyl-[(1-&gt;2)-alpha-L-rhamnosyl-(1-&gt;4)-alpha-D-galacturonosyl](n) + UDP-beta-L-rhamnose = [(1-&gt;2)-alpha-L-rhamnosyl-(1-&gt;4)-alpha-D-galacturonosyl](n+1) + UDP + H(+). It functions in the pathway glycan metabolism; pectin biosynthesis. In terms of biological role, glycosyltransferase involved in the formation of rhamnogalacturonan I (RG-I) oligosaccharides in the seed coat mucilage, which is a specialized cell wall with abundant RG-I. Transfers the rhamnose residue from UDP-beta-L-rhamnose to RG-I oligosaccharides. Prefers RG-I oligosaccharides with a degree of polymerization of 5 or larger than 5. Does not act on oligosaccharides with a degree of polymerization of 4 or smaller than 4. Does not require metal ions for its activity. This Arabidopsis thaliana (Mouse-ear cress) protein is Rhamnogalacturonan I rhamnosyltransferase 1.